The sequence spans 227 residues: Type II restriction enzyme HhaII (227 aa).

In terms of assembly, homodimer.

The enzyme catalyses Endonucleolytic cleavage of DNA to give specific double-stranded fragments with terminal 5'-phosphates.. Functionally, a P subtype restriction enzyme that recognizes the double-stranded sequence 5'-GANTC-3' and cleaves after G-1. This Haemophilus parahaemolyticus protein is Type II restriction enzyme HhaII (hhaIIR).